The primary structure comprises 210 residues: Ribonuclease HII (210 aa).

Residues 2 to 203 (SGVMGIDEAG…YKRVESEVKQ (202 aa)) form the RNase H type-2 domain. A divalent metal cation contacts are provided by aspartate 8, glutamate 9, and aspartate 99.

This sequence belongs to the RNase HII family. Mn(2+) is required as a cofactor. Requires Mg(2+) as cofactor.

The protein localises to the cytoplasm. It catalyses the reaction Endonucleolytic cleavage to 5'-phosphomonoester.. Endonuclease that specifically degrades the RNA of RNA-DNA hybrids. The polypeptide is Ribonuclease HII (Methanopyrus kandleri (strain AV19 / DSM 6324 / JCM 9639 / NBRC 100938)).